The sequence spans 252 residues: MKTVTVKDLVIGAGAPKIIVSLMAKDIARVKSEALAYREADFDILEWRVDHFADLSNVESVMAAAKILRETMPEKPLLFTFRSAKEGGEQAISTEAYIALNRAAIDSGLVDMIDLELFTGDDQVKETVAYAHAHDVKVVMSNHDFHKTPEAEEIIARLRKMQSFDADIPKIALMPQSTSDVLTLLAATLEMQEQYADRPIITMSMAKTGVISRLVGEVFGSAATFGAVKKASAPGQISVNDLRTVLTILHQA.

Residues Ser-21, 46-48 (EWR), and Arg-82 contribute to the 3-dehydroquinate site. Catalysis depends on His-143, which acts as the Proton donor/acceptor. The active-site Schiff-base intermediate with substrate is Lys-170. Positions 213, 232, and 236 each coordinate 3-dehydroquinate.

Belongs to the type-I 3-dehydroquinase family. In terms of assembly, homodimer.

It carries out the reaction 3-dehydroquinate = 3-dehydroshikimate + H2O. The protein operates within metabolic intermediate biosynthesis; chorismate biosynthesis; chorismate from D-erythrose 4-phosphate and phosphoenolpyruvate: step 3/7. Functionally, involved in the third step of the chorismate pathway, which leads to the biosynthesis of aromatic amino acids. Catalyzes the cis-dehydration of 3-dehydroquinate (DHQ) and introduces the first double bond of the aromatic ring to yield 3-dehydroshikimate. The chain is 3-dehydroquinate dehydratase from Shigella flexneri serotype 5b (strain 8401).